The sequence spans 346 residues: Phosphate acyltransferase (346 aa).

The protein belongs to the PlsX family. In terms of assembly, homodimer. Probably interacts with PlsY.

Its subcellular location is the cytoplasm. The catalysed reaction is a fatty acyl-[ACP] + phosphate = an acyl phosphate + holo-[ACP]. The protein operates within lipid metabolism; phospholipid metabolism. In terms of biological role, catalyzes the reversible formation of acyl-phosphate (acyl-PO(4)) from acyl-[acyl-carrier-protein] (acyl-ACP). This enzyme utilizes acyl-ACP as fatty acyl donor, but not acyl-CoA. This Geobacter sulfurreducens (strain ATCC 51573 / DSM 12127 / PCA) protein is Phosphate acyltransferase.